A 385-amino-acid chain; its full sequence is 1-deoxy-D-xylulose 5-phosphate reductoisomerase (385 aa).

The NADPH site is built by threonine 10, glycine 11, serine 12, isoleucine 13, lysine 37, and asparagine 124. Lysine 125 contacts 1-deoxy-D-xylulose 5-phosphate. Glutamate 126 is a binding site for NADPH. Position 150 (aspartate 150) interacts with Mn(2+). Positions 151, 152, 176, and 199 each coordinate 1-deoxy-D-xylulose 5-phosphate. Residue glutamate 152 participates in Mn(2+) binding. Glycine 205 lines the NADPH pocket. Residues serine 212, asparagine 217, lysine 218, and glutamate 221 each contribute to the 1-deoxy-D-xylulose 5-phosphate site. Glutamate 221 is a Mn(2+) binding site.

The protein belongs to the DXR family. It depends on Mg(2+) as a cofactor. Mn(2+) serves as cofactor.

It catalyses the reaction 2-C-methyl-D-erythritol 4-phosphate + NADP(+) = 1-deoxy-D-xylulose 5-phosphate + NADPH + H(+). The protein operates within isoprenoid biosynthesis; isopentenyl diphosphate biosynthesis via DXP pathway; isopentenyl diphosphate from 1-deoxy-D-xylulose 5-phosphate: step 1/6. In terms of biological role, catalyzes the NADPH-dependent rearrangement and reduction of 1-deoxy-D-xylulose-5-phosphate (DXP) to 2-C-methyl-D-erythritol 4-phosphate (MEP). The chain is 1-deoxy-D-xylulose 5-phosphate reductoisomerase from Clostridium botulinum (strain ATCC 19397 / Type A).